A 131-amino-acid chain; its full sequence is MAKPGNKTATKKKVKKTVIDGVAHIHASFNNTIVTITDRQGNALAWATSGGSGFRGSRKSTPFAAQVAAERAGEAAKEYGLKNLDVEVKGPGPGRESAVRALNNVGYKITNITDVTPIPHNGCRPPKKRRV.

The protein belongs to the universal ribosomal protein uS11 family. In terms of assembly, part of the 30S ribosomal subunit. Interacts with proteins S7 and S18. Binds to IF-3.

In terms of biological role, located on the platform of the 30S subunit, it bridges several disparate RNA helices of the 16S rRNA. Forms part of the Shine-Dalgarno cleft in the 70S ribosome. This is Small ribosomal subunit protein uS11 from Cellvibrio japonicus (strain Ueda107) (Pseudomonas fluorescens subsp. cellulosa).